The chain runs to 724 residues: Disks large homolog 4 (724 aa).

S-palmitoyl cysteine attachment occurs at residues C3 and C5. Residues 15–35 form a disordered region; the sequence is QDEDTPPLEHSPAHLPNQANS. PDZ domains are found at residues 65 to 151 and 160 to 246; these read EITL…VMRR and EIKL…VAKP. Phosphoserine is present on residues S73 and S142. Y240 is subject to Phosphotyrosine. S295 is modified (phosphoserine). A PDZ 3 domain is found at 313-393; the sequence is RIVIHRGSTG…QTVTIIAQYK (81 aa). Residues S415 and S418 each carry the phosphoserine modification. Position 420 is a phosphothreonine (T420). A phosphoserine mark is found at S422, S425, S449, and S480. The SH3 domain maps to 428–498; sequence KRGFYIRALF…PSKRRVERRE (71 aa). Residues 534-709 form the Guanylate kinase-like domain; that stretch reads ARPIIILGPT…IYHKVKRVIE (176 aa). The residue at position 580 (Y580) is a Phosphotyrosine. Residues S606 and S654 each carry the phosphoserine modification. A Phosphotyrosine modification is found at Y715.

The protein belongs to the MAGUK family. As to quaternary structure, interacts through its PDZ domains with ANO2 and NETO1. Interacts with KCNJ4. Interacts through its first two PDZ domains with GRIN2A, GRIN2B, GRIN2C and GRIN2D. Interacts with ERBB4. Interacts with KCNA1, KCNA2, KCNA3 and KCNA4. Interacts with LRRC4 and LRRC4B. Interacts with SYNGAP1. Interacts with ASIC3. Interacts with SEMA4C. Interacts with CXADR. Interacts with KCND2. Interacts (via first PDZ domain) with CRIPT. Interacts through its first PDZ domain with GRIK2 and KCNA4. Interacts through its second PDZ domain with the PDZ domain of NOS1 or the C-terminus of CAPON. Interacts through its third PDZ domain with NLGN1 and CRIPT, and probably with NLGN2 and NLGN3. Interacts through its guanylate kinase-like domain with DLGAP1/GKAP, DLGAP2, DLGAP3, DLGAP4, MAP1A, BEGAIN and SIPA1L1. Interacts through its guanylate kinase-like domain with KIF13B. Isoform 2 interacts through an L27 domain with HGS/HRS and the first L27 domain of CASK. Interacts with ANKS1B. Interacts with ADR1B. May interact with HTR2A. Interacts with ADAM22, KLHL17 and LGI1. Interacts with FRMPD4 (via C-terminus). Interacts with LRFN1 and LRFN2. Interacts with LRFN4. Interacts (via N-terminal tandem pair of PDZ domains) with GPER1 (via C-terminus tail motif); the interaction is direct and induces the increase of GPER1 protein levels residing at the plasma membrane surface in a estradiol-independent manner. Interacts (via N-terminus tandem pair of PDZ domains) with NOS1 (via N-terminal domain). Interacts with SHANK3. Interacts with GPR85. Interacts with CACNG2 and MPP2 (via the SH3-Guanylate kinase-like sub-module). Interacts with ADGRB1. Found in a complex with PRR7 and GRIN1. Interacts (via PDZ3 domain and to lesser degree via PDZ2 domain) with PRR7. Component of the postsynaptic hippocampal AMPA-type glutamate receptor (AMPAR) complex, at least composed of pore forming AMPAR subunits GRIA1, GRIA2 and GRIA3 and AMPAR auxiliary proteins SHISA6 and SHISA7. Interacts (via its first two PDZ domains) with SHISA6 and SHISA7 (via PDZ-binding motif); the interaction is direct. Interacts (via PDZ domain 2) with SEMA4F (via PDZ-binding motif); this interaction may promote translocation of DLG4/SAP90 to the membrane. Interacts with RPH3A and GRIN2A; this ternary complex regulates NMDA receptor composition at postsynaptic membranes. Interacts with ABR and BCR. Interacts with DGKI (via PDZ-binding motif); controls the localization of DGKI to the synapse. Interacts with C9orf72, SMCR8 and RAB39B. Interacts with ZDHHC5. Interacts with PTEN (via PDZ domain-binding motif); the interaction is induced by NMDA and is required for PTEN location at postsynaptic density. Found in a complex with GRIA1, GRIA2, GRIA3, GRIA4, CACNG8 and CNIH2. Interacts with FAM81A; the interaction facilitates condensate formation via liquid-liquid phase separation. Interacts with ADGRL3. Interacts with SORCS3. In terms of processing, palmitoylated. Palmitoylation is required for targeting to postsynaptic density, plasma membrane and synapses. Palmitoylation by ZDHHC2 occurs when the synaptic activity decreases and induces DLG4 synaptic clustering. Palmitoylation by ZDHHC15 regulates trafficking to the postsynaptic density and function in synaptogenesis. Palmitoylation may play a role in glutamate receptor GRIA1 synapse clustering. Depalmitoylated by ABHD17A and ABHD17B and to a lesser extent by ABHD17C, ABHD12, ABHD13, LYPLA1 and LYPLA2. Undergoes rapid synaptic palmitoylation/depalmitoylation cycle during neuronal development which slows down in mature neurons. Ubiquitinated by MDM2 in response to NMDA receptor activation, leading to proteasome-mediated degradation of DLG4 which is required for AMPA receptor endocytosis. Expressed in brain (at protein level). Detected in juxtaparanodal zones in the central nervous system and at nerve terminal plexuses of basket cells in the cerebellum. Expressed in cerebrum. Expressed in hippocampal neurons (at protein level). Isoform 1 and isoform 2: highly expressed in cerebellum, cortex, hippocampus, and corpus striatum.

It localises to the cell membrane. Its subcellular location is the postsynaptic density. The protein localises to the synapse. The protein resides in the cytoplasm. It is found in the cell projection. It localises to the axon. Its subcellular location is the dendritic spine. The protein localises to the dendrite. The protein resides in the presynapse. Postsynaptic scaffolding protein that plays a critical role in synaptogenesis and synaptic plasticity by providing a platform for the postsynaptic clustering of crucial synaptic proteins. Interacts with the cytoplasmic tail of NMDA receptor subunits and shaker-type potassium channels. Required for synaptic plasticity associated with NMDA receptor signaling. Overexpression or depletion of DLG4 changes the ratio of excitatory to inhibitory synapses in hippocampal neurons. May reduce the amplitude of ASIC3 acid-evoked currents by retaining the channel intracellularly. May regulate the intracellular trafficking of ADR1B. Also regulates AMPA-type glutamate receptor (AMPAR) immobilization at postsynaptic density keeping the channels in an activated state in the presence of glutamate and preventing synaptic depression. Under basal conditions, cooperates with FYN to stabilize palmitoyltransferase ZDHHC5 at the synaptic membrane through FYN-mediated phosphorylation of ZDHHC5 and its subsequent inhibition of association with endocytic proteins. This Rattus norvegicus (Rat) protein is Disks large homolog 4.